The following is a 101-amino-acid chain: Small ribosomal subunit protein bS18c (101 aa).

Over residues 1–19 (MDKSKQPFRKSKRSFRRRL) the composition is skewed to basic residues. The tract at residues 1-24 (MDKSKQPFRKSKRSFRRRLPPIGS) is disordered.

Belongs to the bacterial ribosomal protein bS18 family. As to quaternary structure, part of the 30S ribosomal subunit.

Its subcellular location is the plastid. It is found in the chloroplast. This is Small ribosomal subunit protein bS18c from Amborella trichopoda.